Reading from the N-terminus, the 680-residue chain is Lipase 1 (680 aa).

Positions 1–34 are cleaved as a signal peptide; the sequence is MKSQNKYSIRKFSVGASSILIATLLFLSGGQAQA. Positions 35 to 290 are excised as a propeptide; that stretch reads AEKQVNMGNS…AKAKGDQTNK (256 aa). Disordered regions lie at residues 39–58 and 82–260; these read VNMG…GDQQ and KNLH…KNGL. Over residues 40-58 the composition is skewed to polar residues; it reads NMGNSQEDTVTAQSIGDQQ. Residues 84–112 show a composition bias toward basic and acidic residues; it reads LHNDKTISEENHRKTDDLNKDQLKDDKKS. Composition is skewed to polar residues over residues 162-193 and 204-223; these read SQDL…SQRE and QPQQ…FNNE. The segment covering 224-234 has biased composition (basic and acidic residues); sequence QEVKPQKDEKT. Over residues 235–246 the composition is skewed to polar residues; sequence LSVSDLKNNQKS. The active-site Nucleophile is the Ser-408. Catalysis depends on Asp-600, which acts as the Charge relay system. Residue Asp-638 participates in Ca(2+) binding. The active-site Charge relay system is the His-639. Residues Asp-641, Asp-646, and Asp-649 each coordinate Ca(2+).

This sequence belongs to the AB hydrolase superfamily. Lipase family.

The protein resides in the secreted. It carries out the reaction a triacylglycerol + H2O = a diacylglycerol + a fatty acid + H(+). In Staphylococcus aureus (strain MRSA252), this protein is Lipase 1 (lip1).